The primary structure comprises 723 residues: uncharacterized protein (723 aa).

Residues 1 to 12 (MTGKKKNRHQKK) are compositionally biased toward basic residues. Disordered stretches follow at residues 1 to 166 (MTGK…EKEI), 181 to 212 (IKRK…SGWG), 268 to 289 (LPLS…DNDN), and 391 to 455 (KNKS…NTST). Positions 30 to 42 (DETTTTTTTTTTT) are enriched in low complexity. 2 stretches are compositionally biased toward basic and acidic residues: residues 45-129 (EETK…KTDD) and 149-166 (TDIK…EKEI). A coiled-coil region spans residues 53-173 (IVENKDEDKK…KEIEDPNKKY (121 aa)). A compositionally biased stretch (basic residues) spans 181–190 (IKRKKEKKVK). Residues 193–204 (PVQPTPPVPAPA) show a composition bias toward pro residues. The segment covering 272–288 (DTEDSDNDNDNGGDDND) has biased composition (acidic residues). Positions 397–455 (DENNNNNNNNNQQQPQQQQTTSPTLSTSPTSPKSPTTTTTNTTTTTTTNTNNNNNNTST) are enriched in low complexity.

This is an uncharacterized protein from Dictyostelium discoideum (Social amoeba).